The following is a 471-amino-acid chain: Putative multidrug resistance protein MdtD (471 aa).

The Periplasmic segment spans residues 1–11 (MTDLPDSTRWQ). Residues 12–32 (LWIVAFGFFMQSLDTTIVNTA) form a helical membrane-spanning segment. The Cytoplasmic segment spans residues 33–48 (LPSMAQSLGESPLHMH). A helical transmembrane segment spans residues 49-69 (MVIVSYVLTVAVMLPASGWLA). Residues 70–76 (DKVGVRN) lie on the Periplasmic side of the membrane. Residues 77-97 (IFFTAIVLFTLGSLFCALSGT) form a helical membrane-spanning segment. Over 98 to 101 (LNEL) the chain is Cytoplasmic. A helical transmembrane segment spans residues 102 to 124 (LLARALQGVGGAMMVPVGRLTVM). Topologically, residues 125–137 (KIVPREQYMAAMT) are periplasmic. The helical transmembrane segment at 138 to 158 (FVTLPGQVGPLLGPALGGLLV) threads the bilayer. At 159–164 (EYASWH) the chain is on the cytoplasmic side. A helical membrane pass occupies residues 165–185 (WIFLINIPVGIIGAIATLMLM). Residues 186–196 (PNYTMQTRRFD) lie on the Periplasmic side of the membrane. A helical membrane pass occupies residues 197–217 (LSGFLLLAVGMAVLTLALDGS). The Cytoplasmic portion of the chain corresponds to 218–224 (KGTGLSP). The chain crosses the membrane as a helical span at residues 225–245 (LAIAGLVAVGVVALVLYLLHA). Over 246-262 (RNNNRALFSLKLFRTRT) the chain is Periplasmic. Residues 263-283 (FSLGLAGSFAGRIGSGMLPFM) form a helical membrane-spanning segment. Residues 284 to 285 (TP) lie on the Cytoplasmic side of the membrane. A helical transmembrane segment spans residues 286–306 (VFLQIGLGFSPFHAGLMMIPM). Topologically, residues 307-341 (VLGSMGMKRIVVQVVNRFGYRRVLVATTLGLSLVT) are periplasmic. A helical membrane pass occupies residues 342–362 (LLFMTTALLGWYYVLPFVLFL). Residues 363 to 395 (QGMVNSTRFSSMNTLTLKDLPDNLASSGNSLLS) lie on the Cytoplasmic side of the membrane. Residues 396–416 (MIMQLSMSIGVTIAGLLLGLF) form a helical membrane-spanning segment. At 417–430 (GSQHVSIDSGTTQT) the chain is on the periplasmic side. A helical membrane pass occupies residues 431–451 (VFMYTWLSMALIIALPAFIFA). Over 452–471 (RVPNDTHQNVAISRRKRSAQ) the chain is Cytoplasmic.

Belongs to the major facilitator superfamily. TCR/Tet family.

It is found in the cell inner membrane. The chain is Putative multidrug resistance protein MdtD from Escherichia coli (strain 55989 / EAEC).